The primary structure comprises 488 residues: GTPase Der (488 aa).

2 consecutive EngA-type G domains span residues 3–166 (PVIA…PRDP) and 193–366 (IKIA…MSAV). Residues 9–16 (GRPNVGKS), 56–60 (DTGGI), 118–121 (NKID), 199–206 (GRPNVGKS), 246–250 (DTAGV), and 311–314 (NKWD) each bind GTP. A KH-like domain is found at 367-451 (TRWPTSRLTQ…PIRIEYKGGD (85 aa)). Residues 449-461 (GGDNPFEGKKNTL) are compositionally biased toward basic and acidic residues. Residues 449–488 (GGDNPFEGKKNTLTDRQVNKKRRLMSHHKKAEKKRRDKRK) are disordered. A compositionally biased stretch (basic residues) spans 467 to 488 (NKKRRLMSHHKKAEKKRRDKRK).

The protein belongs to the TRAFAC class TrmE-Era-EngA-EngB-Septin-like GTPase superfamily. EngA (Der) GTPase family. Associates with the 50S ribosomal subunit.

In terms of biological role, GTPase that plays an essential role in the late steps of ribosome biogenesis. This is GTPase Der from Pseudomonas entomophila (strain L48).